Here is a 123-residue protein sequence, read N- to C-terminus: uncharacterized protein (123 aa).

Residues 34–53 (LPFFFLFLGNLGKFFFLWPL) form a helical membrane-spanning segment.

It is found in the membrane. This is an uncharacterized protein from Saccharomyces cerevisiae (strain ATCC 204508 / S288c) (Baker's yeast).